A 532-amino-acid chain; its full sequence is Undecaprenyl-phosphate glucose phosphotransferase (532 aa).

Helical transmembrane passes span 81-101 (QVVVLSDAFCVCLAVVACIAW), 110-130 (ELSGALLLANIMAAGAFFLFP), 155-175 (VAFGEVVFCTVLVMLSWPFGV), 183-203 (WLTFVVAILFVERCVGTYILH), and 344-364 (TASVLLLLALAPLLTLVALAI).

It belongs to the bacterial sugar transferase family.

It localises to the membrane. The enzyme catalyses di-trans,octa-cis-undecaprenyl phosphate + UDP-alpha-D-glucose = alpha-D-glucosyl di-trans,octa-cis-undecaprenyl diphosphate + UMP. In terms of biological role, involved in the biosynthesis of the exopolysaccharide acetan, a water-soluble polysaccharide involved in production of bacterial cellulose (BC). This Komagataeibacter xylinus (Gluconacetobacter xylinus) protein is Undecaprenyl-phosphate glucose phosphotransferase (aceA).